A 365-amino-acid chain; its full sequence is Putrescine 2-hydroxylase (365 aa).

Positions 44-141 constitute a Rieske domain; that stretch reads GHELMVPEVG…LQNWNGLLFE (98 aa). [2Fe-2S] cluster-binding residues include Cys-81, His-83, Cys-100, and His-103.

The protein belongs to the bacterial ring-hydroxylating dioxygenase alpha subunit family. [2Fe-2S] cluster is required as a cofactor.

Functionally, rieske-type iron sulfur protein that can catalyze in vitro the 2-hydroxylation of putrescine, forming 2-hydroxyputrescine. May be involved in the biosynthesis of the cyclic hydroxamate siderophore alcaligin. The chain is Putrescine 2-hydroxylase from Ralstonia nicotianae (strain ATCC BAA-1114 / GMI1000) (Ralstonia solanacearum).